Here is a 469-residue protein sequence, read N- to C-terminus: Melanopsin (469 aa).

Topologically, residues 1–71 (MDSPPGPTAP…VDVPDHAHYI (71 aa)) are extracellular. Asn30 carries N-linked (GlcNAc...) asparagine glycosylation. The helical transmembrane segment at 72–92 (LGTVILLVGLTGMLGNLTVIY) threads the bilayer. Topologically, residues 93-106 (TFCRSRSLRTPANM) are cytoplasmic. A helical transmembrane segment spans residues 107–127 (LIINLAVSDFLMSFTQAPVFF). Topologically, residues 128–143 (ASSLYKKWLFGETGCE) are extracellular. Cys142 and Cys220 are disulfide-bonded. A helical membrane pass occupies residues 144 to 164 (FYAFCGAVLGITSMITLTAIA). At 165-187 (LDRYLVITRPLATIGMGSKRRTA) the chain is on the cytoplasmic side. Residues 188 to 208 (LVLLGIWLYALAWSLPPFFGW) traverse the membrane as a helical segment. Over 209–237 (SAYVPEGLLTSCSWDYVTFTPQVRAYTML) the chain is Extracellular. A helical transmembrane segment spans residues 238 to 258 (LFCFVFFLPLLVIIFCYISIF). Residues 259–295 (RAIRETGRACEGWSESPQRRRQWHRLQSEWKMAKVAL) are Cytoplasmic-facing. The helical transmembrane segment at 296–316 (IVILLFVLSWAPYSTVALVAF) threads the bilayer. The Extracellular segment spans residues 317–328 (AGYSHILTPYMS). The chain crosses the membrane as a helical span at residues 329–349 (SVPAVIAKASAIHNPIVYAIT). N6-(retinylidene)lysine is present on Lys336. Residues 350–469 (HPKYRAAIAQ…SLDLGMQDAP (120 aa)) are Cytoplasmic-facing. Residues 409–469 (GSESEVGWTD…SLDLGMQDAP (61 aa)) are disordered.

Belongs to the G-protein coupled receptor 1 family. Opsin subfamily.

Its subcellular location is the cell membrane. It is found in the cell projection. The protein resides in the axon. The protein localises to the dendrite. It localises to the perikaryon. Functionally, photoreceptor that binds cis-retinaldehydes. Contributes to pupillar reflex, photoentrainment and other non-image forming responses to light. May be involved in the optokinetic visual tracking response. May be involved in the regulation of retinal hyaloid vessel growth and regression. The sequence is that of Melanopsin (OPN4) from Phodopus sungorus (Striped hairy-footed hamster).